Here is a 75-residue protein sequence, read N- to C-terminus: Tautomerase PptA (75 aa).

Catalysis depends on proline 2, which acts as the Proton acceptor; via imino nitrogen.

The protein belongs to the 4-oxalocrotonate tautomerase family. PptA subfamily. Homodimer.

The protein resides in the cytoplasm. The protein is Tautomerase PptA of Klebsiella pneumoniae subsp. pneumoniae (strain ATCC 700721 / MGH 78578).